The sequence spans 363 residues: S-adenosylmethionine:tRNA ribosyltransferase-isomerase (363 aa).

Belongs to the QueA family. In terms of assembly, monomer.

The protein localises to the cytoplasm. It carries out the reaction 7-aminomethyl-7-carbaguanosine(34) in tRNA + S-adenosyl-L-methionine = epoxyqueuosine(34) in tRNA + adenine + L-methionine + 2 H(+). It functions in the pathway tRNA modification; tRNA-queuosine biosynthesis. In terms of biological role, transfers and isomerizes the ribose moiety from AdoMet to the 7-aminomethyl group of 7-deazaguanine (preQ1-tRNA) to give epoxyqueuosine (oQ-tRNA). This chain is S-adenosylmethionine:tRNA ribosyltransferase-isomerase, found in Brucella abortus (strain S19).